Consider the following 723-residue polypeptide: MSEKQVFSTEWAGKTLSVEVGQLAKQASGAALIRYGDTVVLTAAVGSKKPRPGDFFPLTVNYEEKMYSVGKVPGGFLKREGRPSDRATLTARLIDRPIRPLFAEGFRNEVQITSTVFSVDQDCSPEMAAMLGSSVALVISDIPFEGPIAGVDVGRIDGKYVINPTIEQAEKSDISLTVAGTYDAINMVEAGAKEVSEEAMLEAIMFGHEEIKRLCEFQQQIIAAVGKEKREIELFVSDPELEAEVKAASEGKMKAAIKTEEKKAREAAIEEVKEEILESYKAKELENEAEILGEVAHILEMIEKDEMRRLISQDKIRPDGRKVNEIRPLSSEVGMLPRVHGSGLFTRGQTQALSVCTLAPLREHQIIDGLGTEEYKRFMHHYNFPQFSVGETGPRRAPGRREIGHGALGERALQYVIPSEEEFPYTIRLVSEVLESNGSSSQASICGSTLAMLDAGVPIKAPVAGIAMGLVKLGDDYTILSDIQGMEDHFGDMDFKVAGTKDGITALQMDIKIDGLSRQILDEALTQAKEGRLHILEHLTSTISEPREELSAYAPKIITLNIKPEKIKDVIGPGGKQINAIIEETGVKIDIEQDGTVYIASQDQAMNRKAIAIIEDIVREVEVGEVYTGKVRRIEKFGAFVELFKGTDGLVHISELAHERVGKVEDILKLGDEVTVKVIEVDHQGRVNLSRKALLEKKEQPEGDKKPQAEKKFYPKTKKPESK.

Mg(2+) contacts are provided by D488 and D494. Positions 555 to 614 (PKIITLNIKPEKIKDVIGPGGKQINAIIEETGVKIDIEQDGTVYIASQDQAMNRKAIAII) constitute a KH domain. The region spanning 624-692 (GEVYTGKVRR…HQGRVNLSRK (69 aa)) is the S1 motif domain. The disordered stretch occupies residues 692 to 723 (KALLEKKEQPEGDKKPQAEKKFYPKTKKPESK). Positions 693–723 (ALLEKKEQPEGDKKPQAEKKFYPKTKKPESK) are enriched in basic and acidic residues.

Belongs to the polyribonucleotide nucleotidyltransferase family. Mg(2+) serves as cofactor.

It is found in the cytoplasm. The enzyme catalyses RNA(n+1) + phosphate = RNA(n) + a ribonucleoside 5'-diphosphate. Its function is as follows. Involved in mRNA degradation. Catalyzes the phosphorolysis of single-stranded polyribonucleotides processively in the 3'- to 5'-direction. The protein is Polyribonucleotide nucleotidyltransferase of Listeria innocua serovar 6a (strain ATCC BAA-680 / CLIP 11262).